The chain runs to 66 residues: Large ribosomal subunit protein uL29 (66 aa).

Belongs to the universal ribosomal protein uL29 family.

This Allorhizobium ampelinum (strain ATCC BAA-846 / DSM 112012 / S4) (Agrobacterium vitis (strain S4)) protein is Large ribosomal subunit protein uL29.